The primary structure comprises 141 residues: Light-regulated protein 1, chloroplastic (141 aa).

The N-terminal 41 residues, 1-41 (MQGALFIKPTILLPLPSSVSSPKLTFLLPHATKASRLSSLR), are a transit peptide targeting the chloroplast. Low complexity predominate over residues 35–51 (SRLSSLRSNNSSSSSSL). The disordered stretch occupies residues 35–58 (SRLSSLRSNNSSSSSSLTSDPNTV). Residues 58–132 (VDYNSSILSV…ACDDLGGEFC (75 aa)) are 2 X 15 AA approximate repeats. 2 repeat units span residues 67–81 (VFPAEACEVISGYAC) and 118–132 (VFREEACDDLGGEFC).

In terms of assembly, component of high molecular weight thylakoid LFNRs-containing protein complexes containing LIR1, LFNR1, LFNR2, TIC62 and TROL proteins. Interacts directly with LFNR1 and LFNR2; LIR1 increases the affinity of LFNR1 and LFNR2 for TIC62 and subsequent thylakoid relocalization. In terms of processing, may form interchain disulfide bonds with LFNR1 and LFNR2.

The protein resides in the plastid. It localises to the chloroplast thylakoid membrane. It is found in the chloroplast envelope. The protein localises to the chloroplast stroma. Functionally, thylakoid-determinant subunit of high molecular weight LFNRs-containing protein complexes. In Arabidopsis thaliana (Mouse-ear cress), this protein is Light-regulated protein 1, chloroplastic.